We begin with the raw amino-acid sequence, 646 residues long: Serine/threonine-protein kinase max-2 (646 aa).

The interval 19–40 is disordered; it reads FSPSDKDKDRDDEMKPSSSAMD. Basic and acidic residues predominate over residues 22 to 33; sequence SDKDKDRDDEMK. The CRIB domain maps to 41–54; the sequence is ISQPYNTVHRVHVG. The disordered stretch occupies residues 136–345; sequence LQCSNGSATS…PPPPEEPPVR (210 aa). 2 stretches are compositionally biased toward low complexity: residues 142–157 and 167–180; these read SATS…SSSA and LSTA…LSLS. Residues 196-205 show a composition bias toward polar residues; sequence SAPQLKTFTG. Residues 214–223 are compositionally biased toward pro residues; the sequence is SPFPPQPPVL. Residues 229–245 are compositionally biased toward low complexity; that stretch reads TASAVATTTTNPTTSNG. The segment covering 246–262 has biased composition (pro residues); the sequence is APPPVPGSKGPPVPPKP. Low complexity-rich tracts occupy residues 273–307 and 323–334; these read SSGC…DGDV and KNGNTTTNKTTV. In terms of domain architecture, Protein kinase spans 376–627; it reads YEMKKQIGVG…TTELLAHPFL (252 aa). ATP contacts are provided by residues 382-390 and Lys-405; that span reads IGVGASGTV. Catalysis depends on Asp-496, which acts as the Proton acceptor.

Belongs to the protein kinase superfamily. STE Ser/Thr protein kinase family. STE20 subfamily. In terms of assembly, interacts with mlk-1; the interaction is independent of max-2 and mlk-1 kinase activities. Interacts with mig-2 (GTP-bound form). Mg(2+) serves as cofactor.

The protein localises to the perikaryon. The protein resides in the cell projection. It is found in the dendrite. It localises to the cytoplasm. The enzyme catalyses L-seryl-[protein] + ATP = O-phospho-L-seryl-[protein] + ADP + H(+). It carries out the reaction L-threonyl-[protein] + ATP = O-phospho-L-threonyl-[protein] + ADP + H(+). In terms of biological role, serine/threonine-protein kinase, which phosphorylates mlk-1. Involved in the stress response to heavy metals by activating the mlk-1/mek-1/kgb-1 pathway. In ventral cord commissural motoneurons, required for dorsal axon guidance downstream of unc-6/netrin repulsion receptor unc-5 and probably of Rho GTPases ced-10 and mig-2. Plays a redundant role with mig-10 in orientating axonal growth of HSN neurons. Plays a redundant role with pak-1 in P neuroblast migration and in distal tip cell (DTC)-mediated guidance of gonad elongation probably downstream of Rho GTPases. In association with pak-2, plays a role in embryogenesis. In association with pak-1, may be involved in spermatogenesis. This is Serine/threonine-protein kinase max-2 from Caenorhabditis elegans.